Here is a 248-residue protein sequence, read N- to C-terminus: 2,3-bisphosphoglycerate-dependent phosphoglycerate mutase 2 (248 aa).

Residues 8–15 (RHGESAWN), 21–22 (TG), Arg-60, 87–90 (EKHY), Lys-98, 114–115 (RR), and 183–184 (GN) each bind substrate. His-9 functions as the Tele-phosphohistidine intermediate in the catalytic mechanism. The active-site Proton donor/acceptor is Glu-87.

It belongs to the phosphoglycerate mutase family. BPG-dependent PGAM subfamily.

The enzyme catalyses (2R)-2-phosphoglycerate = (2R)-3-phosphoglycerate. The protein operates within carbohydrate degradation; glycolysis; pyruvate from D-glyceraldehyde 3-phosphate: step 3/5. In terms of biological role, catalyzes the interconversion of 2-phosphoglycerate and 3-phosphoglycerate. The chain is 2,3-bisphosphoglycerate-dependent phosphoglycerate mutase 2 from Bacteroides thetaiotaomicron (strain ATCC 29148 / DSM 2079 / JCM 5827 / CCUG 10774 / NCTC 10582 / VPI-5482 / E50).